The chain runs to 610 residues: Isocitrate dehydrogenase kinase/phosphatase (610 aa).

Residues 359–365 (APGFKGT) and Lys380 each bind ATP. Asp419 is a catalytic residue.

This sequence belongs to the AceK family.

The protein resides in the cytoplasm. The enzyme catalyses L-seryl-[isocitrate dehydrogenase] + ATP = O-phospho-L-seryl-[isocitrate dehydrogenase] + ADP + H(+). Its function is as follows. Bifunctional enzyme which can phosphorylate or dephosphorylate isocitrate dehydrogenase (IDH) on a specific serine residue. This is a regulatory mechanism which enables bacteria to bypass the Krebs cycle via the glyoxylate shunt in response to the source of carbon. When bacteria are grown on glucose, IDH is fully active and unphosphorylated, but when grown on acetate or ethanol, the activity of IDH declines drastically concomitant with its phosphorylation. The sequence is that of Isocitrate dehydrogenase kinase/phosphatase from Rhodopseudomonas palustris (strain ATCC BAA-98 / CGA009).